Here is a 648-residue protein sequence, read N- to C-terminus: Macrolide export ATP-binding/permease protein MacB (648 aa).

The ABC transporter domain occupies 5–243; sequence LELKDIRRSY…TGGTEPVVNT (239 aa). 41–48 is an ATP binding site; it reads GASGSGKS. The next 4 membrane-spanning stretches (helical) occupy residues 273–293, 523–543, 576–596, and 611–631; these read LLTM…VVVG, LFLT…VMNI, AVLV…LIAF, and PLAL…FGWL.

Belongs to the ABC transporter superfamily. Macrolide exporter (TC 3.A.1.122) family. As to quaternary structure, homodimer. Part of the tripartite efflux system MacAB-TolC, which is composed of an inner membrane transporter, MacB, a periplasmic membrane fusion protein, MacA, and an outer membrane component, TolC. The complex forms a large protein conduit and can translocate molecules across both the inner and outer membranes. Interacts with MacA.

The protein localises to the cell inner membrane. Functionally, part of the tripartite efflux system MacAB-TolC. MacB is a non-canonical ABC transporter that contains transmembrane domains (TMD), which form a pore in the inner membrane, and an ATP-binding domain (NBD), which is responsible for energy generation. Confers resistance against macrolides. This chain is Macrolide export ATP-binding/permease protein MacB, found in Escherichia coli O6:K15:H31 (strain 536 / UPEC).